Reading from the N-terminus, the 527-residue chain is D-3-phosphoglycerate dehydrogenase (527 aa).

Residues 149–150, aspartate 169, 228–230, and aspartate 254 each bind NAD(+); these read RV and AAR. Residue arginine 230 is part of the active site. Glutamate 259 is an active-site residue. The Proton donor role is filled by histidine 278. Residue 278–281 participates in NAD(+) binding; sequence HIAA. Positions 453 to 527 constitute an ACT domain; the sequence is YIISLHEDKP…GIIDATYVEL (75 aa).

Belongs to the D-isomer specific 2-hydroxyacid dehydrogenase family.

The catalysed reaction is (2R)-3-phosphoglycerate + NAD(+) = 3-phosphooxypyruvate + NADH + H(+). The protein operates within amino-acid biosynthesis; L-serine biosynthesis; L-serine from 3-phospho-D-glycerate: step 1/3. This is D-3-phosphoglycerate dehydrogenase (serA) from Archaeoglobus fulgidus (strain ATCC 49558 / DSM 4304 / JCM 9628 / NBRC 100126 / VC-16).